The primary structure comprises 70 residues: Large ribosomal subunit protein bL31 (70 aa).

Zn(2+) is bound by residues C16, C18, C37, and C40.

This sequence belongs to the bacterial ribosomal protein bL31 family. Type A subfamily. Part of the 50S ribosomal subunit. Zn(2+) is required as a cofactor.

Its function is as follows. Binds the 23S rRNA. In Haemophilus ducreyi (strain 35000HP / ATCC 700724), this protein is Large ribosomal subunit protein bL31.